A 302-amino-acid polypeptide reads, in one-letter code: Taste receptor type 2 member 104 (302 aa).

Over 1–7 the chain is Extracellular; that stretch reads MLSMLES. A helical transmembrane segment spans residues 8-28; that stretch reads ILLSVATSEAMLGILGNIFIV. Topologically, residues 29-43 are cytoplasmic; it reads LVNCTNWVRNKKLSK. A helical membrane pass occupies residues 44–64; sequence INFILTGLAISRVFTIWIITL. Residues 65–87 are Extracellular-facing; that stretch reads DAYTKVFFLTTLMPSNLHECISY. A helical transmembrane segment spans residues 88–108; it reads IWVIINHLSVWFATSLSIFYF. At 109 to 128 the chain is on the cytoplasmic side; the sequence is LKIANFSHYIFLWLKRRADK. The helical transmembrane segment at 129–149 threads the bilayer; it reads VFVFLIGYLIITWLASFPLAV. The Extracellular segment spans residues 150-182; sequence TVIKNIKVHHNNTSWLIQLEKRELLINYVFANM. Asn-160 and Asn-161 each carry an N-linked (GlcNAc...) asparagine glycan. Residues 183 to 203 form a helical membrane-spanning segment; the sequence is GPISLFMVAVFTCFLLTISLW. Topologically, residues 204 to 233 are cytoplasmic; the sequence is RHRRRMQSTGSKFRDLNTEVHVKAMKVLIS. A helical transmembrane segment spans residues 234–254; it reads FIILFILYFMGVLIETLCLFL. Over 255–257 the chain is Extracellular; it reads TEN. Residues 258 to 278 form a helical membrane-spanning segment; the sequence is ILLFIFGFTLSSTYPCCHSFI. The Cytoplasmic portion of the chain corresponds to 279–302; the sequence is LILTSRELKQASMRALQRLKCCET.

This sequence belongs to the G-protein coupled receptor T2R family.

Its subcellular location is the membrane. Putative taste receptor which may play a role in the perception of bitterness. The sequence is that of Taste receptor type 2 member 104 from Rattus norvegicus (Rat).